The primary structure comprises 202 residues: Protein phosphatase 1 regulatory subunit 1B (202 aa).

Met-1 is modified (N-acetylmethionine). The disordered stretch occupies residues 1–202 (MDPKDRKKIQ…QRPAHPEPGT (202 aa)). Thr-34 bears the Phosphothreonine; by PKA mark. A compositionally biased stretch (basic and acidic residues) spans 41-63 (LSEHSSPEEEASPHQRASGEGHH). Phosphoserine is present on residues Ser-45 and Ser-46. Thr-75 bears the Phosphothreonine; by CDK5 mark. The segment covering 89–100 (HLQSISNLGENQ) has biased composition (polar residues). Position 102 is a phosphoserine (Ser-102). The span at 109–118 (GELRELGYPR) shows a compositional bias: basic and acidic residues. The span at 119 to 136 (EEEEEEEEEDEEEEEDSQ) shows a compositional bias: acidic residues. Ser-135 carries the phosphoserine modification. Residues 191 to 202 (EPQRPAHPEPGT) show a composition bias toward basic and acidic residues.

The protein belongs to the protein phosphatase inhibitor 1 family. Dopamine- and cyclic AMP-regulated neuronal phosphoprotein. In terms of processing, phosphorylation of Thr-34 is required for activity.

The protein localises to the cytoplasm. Functionally, inhibitor of protein-phosphatase 1. The protein is Protein phosphatase 1 regulatory subunit 1B (PPP1R1B) of Bos taurus (Bovine).